We begin with the raw amino-acid sequence, 140 residues long: MSASLIRRGLELLEAPGQGKAPPALQQGRDGTRPAGTARRRKVTAGPGKNKATIKGRVVKSAIEEYHKKKAVNHLKANLLYMTSGRCVADKAVTQQVLTQNRGRKSKDRPAEKKEKKKPEGTVFTEEDFRKFEREYFGIP.

2 disordered regions span residues 1–52 (MSAS…KNKA) and 95–123 (QQVLTQNRGRKSKDRPAEKKEKKKPEGTV). Over residues 108 to 120 (DRPAEKKEKKKPE) the composition is skewed to basic and acidic residues.

This sequence belongs to the AROS family. Part of the small subunit (SSU) processome, composed of more than 70 proteins and the RNA chaperone small nucleolar RNA (snoRNA) U3.

The protein localises to the nucleus. Its subcellular location is the nucleolus. Its function is as follows. Part of the small subunit (SSU) processome, first precursor of the small eukaryotic ribosomal subunit. During the assembly of the SSU processome in the nucleolus, many ribosome biogenesis factors, an RNA chaperone and ribosomal proteins associate with the nascent pre-rRNA and work in concert to generate RNA folding, modifications, rearrangements and cleavage as well as targeted degradation of pre-ribosomal RNA by the RNA exosome. Acts as a chaperone that specifically mediates the integration of RPS19 in state post-A1. Direct regulator of SIRT1. The sequence is that of Active regulator of SIRT1 (RPS19BP1) from Gallus gallus (Chicken).